Here is a 106-residue protein sequence, read N- to C-terminus: uncharacterized protein (106 aa).

A disordered region spans residues 28-68 (SSANEPKKLPNKKLVSTKSHTQVNREKSKNKDTYEDYSDSN). Basic and acidic residues predominate over residues 50–61 (VNREKSKNKDTY).

This is an uncharacterized protein from Acanthamoeba polyphaga (Amoeba).